A 308-amino-acid polypeptide reads, in one-letter code: Putative S-adenosyl-L-methionine-dependent methyltransferase Mmcs_1045 (308 aa).

S-adenosyl-L-methionine-binding positions include aspartate 133 and 162-163; that span reads DL.

Belongs to the UPF0677 family.

Its function is as follows. Exhibits S-adenosyl-L-methionine-dependent methyltransferase activity. This chain is Putative S-adenosyl-L-methionine-dependent methyltransferase Mmcs_1045, found in Mycobacterium sp. (strain MCS).